The chain runs to 457 residues: Phenylalanine-4-hydroxylase (457 aa).

Residues 31 to 108 (TIVFTLREKA…EKKVLVQDWN (78 aa)) enclose the ACT domain. Residues H285, H290, and E330 each contribute to the Fe cation site.

It belongs to the biopterin-dependent aromatic amino acid hydroxylase family. In terms of assembly, homotetramer. Requires Fe(2+) as cofactor. In terms of tissue distribution, expressed in the seam cells of the lateral hypodermis, in the ventral hypodermis and in the hyp7 hypodermal syncytium, in hypodermal cells in the tail and in body wall muscle cells (at protein level).

It is found in the cytoplasm. It catalyses the reaction (6R)-L-erythro-5,6,7,8-tetrahydrobiopterin + L-phenylalanine + O2 = (4aS,6R)-4a-hydroxy-L-erythro-5,6,7,8-tetrahydrobiopterin + L-tyrosine. The enzyme catalyses (6R)-L-erythro-5,6,7,8-tetrahydrobiopterin + L-tryptophan + O2 = 5-hydroxy-L-tryptophan + (4aS,6R)-4a-hydroxy-L-erythro-5,6,7,8-tetrahydrobiopterin. It functions in the pathway amino-acid degradation; L-phenylalanine degradation; acetoacetate and fumarate from L-phenylalanine: step 1/6. With respect to regulation, inhibited by tetrahydrobiopterin. Unlike its mammalian orthologs, pah-1 does not exhibit allosteric binding behavior for phenylalanine. Catalyzes the hydroxylation of L-phenylalanine to L-tyrosine. Catalyzes the hydroxylation of tryptophan to 5-hydroxy-L-tryptophan. Plays a role in the biosynthesis of a melanin-like cuticle pigment. This is Phenylalanine-4-hydroxylase from Caenorhabditis elegans.